The chain runs to 895 residues: Glutamate receptor 2.3 (895 aa).

An N-terminal signal peptide occupies residues 1-23 (MRTEKLFFCILLVFFFCLEFNRG). The Extracellular segment spans residues 24–582 (QNNGKTLVDV…ILFMKPLSWK (559 aa)). N-linked (GlcNAc...) asparagine glycans are attached at residues Asn52, Asn203, Asn266, Asn330, Asn342, Asn477, and Asn542. The chain crosses the membrane as a helical span at residues 583–603 (LWLTSFISFFLVGCTVWVLEY). At 604 to 610 (KRNPDFS) the chain is on the cytoplasmic side. The chain crosses the membrane as a helical span at residues 611–631 (GPPRFQASTICWFAFSTMVFA). At 632-635 (PRER) the chain is on the cytoplasmic side. A helical membrane pass occupies residues 636–656 (VFSFWARALVIAWYFLVLVLT). The Extracellular segment spans residues 657–830 (QSYTASLASL…FTSRQLDIDS (174 aa)). The helical transmembrane segment at 831 to 851 (FLFLFVGVLLVCVMALGNFTY) threads the bilayer. Residues 852–895 (CFLAKDQVSYLDKVEMSPCSSSQQMPVKRKTQLNMSQVHDQDSL) are Cytoplasmic-facing. The disordered stretch occupies residues 873–895 (SQQMPVKRKTQLNMSQVHDQDSL).

It belongs to the glutamate-gated ion channel (TC 1.A.10.1) family. As to quaternary structure, may form heteromers. In terms of tissue distribution, expressed predominantly in roots.

The protein resides in the membrane. Functionally, glutamate-gated receptor that probably acts as a non-selective cation channel. May be involved in light-signal transduction and calcium homeostasis via the regulation of calcium influx into cells. The sequence is that of Glutamate receptor 2.3 (GLR2.3) from Arabidopsis thaliana (Mouse-ear cress).